The primary structure comprises 187 residues: Oligoribonuclease (187 aa).

Positions 7–170 (LCWLDMEMTG…DDILESIEEM (164 aa)) constitute an Exonuclease domain. Residue Y128 is part of the active site.

Belongs to the oligoribonuclease family.

Its subcellular location is the cytoplasm. Functionally, 3'-to-5' exoribonuclease specific for small oligoribonucleotides. This Neisseria meningitidis serogroup B (strain ATCC BAA-335 / MC58) protein is Oligoribonuclease.